A 168-amino-acid chain; its full sequence is Endoribonuclease YbeY (168 aa).

The Zn(2+) site is built by His-126, His-130, and His-136.

This sequence belongs to the endoribonuclease YbeY family. Zn(2+) serves as cofactor.

The protein localises to the cytoplasm. Functionally, single strand-specific metallo-endoribonuclease involved in late-stage 70S ribosome quality control and in maturation of the 3' terminus of the 16S rRNA. This is Endoribonuclease YbeY from Sinorhizobium medicae (strain WSM419) (Ensifer medicae).